The chain runs to 1433 residues: CAP-Gly domain-containing linker protein 1 (1433 aa).

The segment at 1–51 (MSMLKPSGLKAPSKTIKHGSTLLKAPASVATAPAEKAPSSEKSSSTTTADA) is disordered. The span at 32–49 (APAEKAPSSEKSSSTTTA) shows a compositional bias: low complexity. Residues 79 to 121 (GETQFAPGQWAGIVLDEPIGKNDGSVAGVRYFQCEPLRGIFTR) enclose the CAP-Gly 1 domain. Residues 133-208 (DEANGTQTAH…VSNLSEAGSL (76 aa)) form a disordered region. Low complexity predominate over residues 140–168 (TAHASRATSPTSTSTASAVSASPAALLPS). The span at 184–204 (TPSQFSNLSKTASGSVSNLSE) shows a compositional bias: polar residues. One can recognise a CAP-Gly 2 domain in the interval 235–277 (GETDFAKGEWCGVELDEPLGKNDGAVAGTRYFQCQPRYGLFAP). The segment covering 319-333 (SLSSVASSVSSKPSR) has biased composition (low complexity). Residues 319–338 (SLSSVASSVSSKPSRTGLLT) are disordered. A coiled-coil region spans residues 351-1353 (TTALQEALKE…CEAALNGNEE (1003 aa)). The CCHC-type zinc-finger motif lies at 1412–1429 (PYCDTCEMFGHWTADCND).

The protein localises to the cytoplasm. It localises to the cytoskeleton. Its subcellular location is the cytoplasmic vesicle membrane. It is found in the cell projection. The protein resides in the ruffle. Its function is as follows. Binds to the plus end of microtubules and regulates the dynamics of the microtubule cytoskeleton. Promotes microtubule growth and microtubule bundling. Links cytoplasmic vesicles to microtubules and thereby plays an important role in intracellular vesicle trafficking. Plays a role macropinocytosis and endosome trafficking. The sequence is that of CAP-Gly domain-containing linker protein 1 (CLIP1) from Gallus gallus (Chicken).